We begin with the raw amino-acid sequence, 264 residues long: Undecaprenyl-diphosphatase (264 aa).

Transmembrane regions (helical) follow at residues 38 to 58, 75 to 95, 106 to 126, 136 to 156, 181 to 201, 217 to 237, and 242 to 262; these read RSDFFNIVIQAGAIVAVVLVF, REYVFKLGAAFLVTAVVGLVV, VSPVAWALIIGGIWMLLVEAY, VTWTVAIGVGLAQVVAGVFPG, FVFLVGIPTMFAASAYTFLEM, VAFLAAAVTGFVVVKWLMGYI, and FTAFALYRIALGAALLLWLPS.

It belongs to the UppP family.

Its subcellular location is the cell inner membrane. The catalysed reaction is di-trans,octa-cis-undecaprenyl diphosphate + H2O = di-trans,octa-cis-undecaprenyl phosphate + phosphate + H(+). Functionally, catalyzes the dephosphorylation of undecaprenyl diphosphate (UPP). Confers resistance to bacitracin. The protein is Undecaprenyl-diphosphatase of Stenotrophomonas maltophilia (strain R551-3).